A 407-amino-acid chain; its full sequence is Cysteine desulfurase (407 aa).

K226 carries the N6-(pyridoxal phosphate)lysine modification. The active-site Cysteine persulfide intermediate is the C364.

Belongs to the class-V pyridoxal-phosphate-dependent aminotransferase family. Csd subfamily. As to quaternary structure, homodimer. Interacts with SufE and the SufBCD complex composed of SufB, SufC and SufD. The interaction with SufE is required to mediate the direct transfer of the sulfur atom from the S-sulfanylcysteine. Requires pyridoxal 5'-phosphate as cofactor.

It localises to the cytoplasm. It catalyses the reaction (sulfur carrier)-H + L-cysteine = (sulfur carrier)-SH + L-alanine. The enzyme catalyses L-selenocysteine + AH2 = hydrogenselenide + L-alanine + A + H(+). It functions in the pathway cofactor biosynthesis; iron-sulfur cluster biosynthesis. Cysteine desulfurases mobilize the sulfur from L-cysteine to yield L-alanine, an essential step in sulfur metabolism for biosynthesis of a variety of sulfur-containing biomolecules. Component of the suf operon, which is activated and required under specific conditions such as oxidative stress and iron limitation. Acts as a potent selenocysteine lyase in vitro, that mobilizes selenium from L-selenocysteine. Selenocysteine lyase activity is however unsure in vivo. This chain is Cysteine desulfurase, found in Pectobacterium atrosepticum (strain SCRI 1043 / ATCC BAA-672) (Erwinia carotovora subsp. atroseptica).